We begin with the raw amino-acid sequence, 293 residues long: Large ribosomal subunit protein uL4 (293 aa).

Composition is skewed to basic and acidic residues over residues Met1–Pro14 and Lys33–Lys55. Disordered regions lie at residues Met1–Glu72 and Gln130–Ser166.

The protein belongs to the universal ribosomal protein uL4 family. Part of the 50S ribosomal subunit.

One of the primary rRNA binding proteins, this protein initially binds near the 5'-end of the 23S rRNA. It is important during the early stages of 50S assembly. It makes multiple contacts with different domains of the 23S rRNA in the assembled 50S subunit and ribosome. In terms of biological role, forms part of the polypeptide exit tunnel. This Mycoplasma mobile (strain ATCC 43663 / 163K / NCTC 11711) (Mesomycoplasma mobile) protein is Large ribosomal subunit protein uL4.